A 423-amino-acid chain; its full sequence is 5-hydroxytryptamine receptor 1A (423 aa).

The Extracellular segment spans residues 1–38 (MEGLSPRQGNNTTSSEGPFGTLGNATGISDVTFSYQVI). Residues Asn10, Asn11, and Asn24 are each glycosylated (N-linked (GlcNAc...) asparagine). A helical membrane pass occupies residues 39-59 (TSLLLGTLIFCAVLGNACVVA). Residues 60–73 (AIALERSLQNVANY) are Cytoplasmic-facing. A helical membrane pass occupies residues 74–98 (LIGSLAVTDLMVSVLVLPMAALYQV). The Extracellular portion of the chain corresponds to 99–107 (LNKWTLGQV). The helical transmembrane segment at 108–132 (TCDLFIALDVLCCTSSILHLCAIAL) threads the bilayer. Residues Cys109 and Cys187 are joined by a disulfide bond. Serotonin is bound by residues Asp116 and Cys120. Residues 133 to 135 (DRY) carry the DRY motif; important for ligand-induced conformation changes motif. The Cytoplasmic portion of the chain corresponds to 133 to 152 (DRYWAITDPIDYVNKRTPRR). A helical membrane pass occupies residues 153–174 (AAALISLTWLIGFLISIPPMLG). Residues 175–193 (WRTPEDRSDPDACTISKDH) lie on the Extracellular side of the membrane. A helical membrane pass occupies residues 194–216 (GYTIYSTFGAFYIPLLLMLVLYG). Residues 217–346 (RIFRAARFRI…LARERKTVKT (130 aa)) lie on the Cytoplasmic side of the membrane. The disordered stretch occupies residues 235–277 (RKGADARSGVSPAPQPRKSVNGEPGGREWRQGPGSQAGGPLCT). Positions 345, 346, and 352 each coordinate 1D-myo-inositol 4-phosphate. The chain crosses the membrane as a helical span at residues 347–370 (LGIIMGTFILCWLPFFIVALVLPF). The Extracellular portion of the chain corresponds to 371–378 (CESSCHMP). A helical transmembrane segment spans residues 379-403 (TLLGAIINWLGYSNSLLNPVIYAYF). The short motif at 396-400 (NPVIY) is the NPxxY motif; important for ligand-induced conformation changes and signaling element. 1D-myo-inositol 4-phosphate contacts are provided by Phe403, Asn404, and Lys405. At 404 to 423 (NKDFQNAFKKIVRCKFCRRR) the chain is on the cytoplasmic side.

Belongs to the G-protein coupled receptor 1 family. 5-hydroxytryptamine receptor subfamily. HTR1A sub-subfamily. In terms of assembly, heterodimer; heterodimerizes with GPER1. Interacts with YIF1B. Interacts with GPR39 and GALR1.

It localises to the cell membrane. It is found in the cell projection. The protein resides in the dendrite. G-protein coupled receptor activity is regulated by lipids: phosphatidylinositol 4-phosphate increases HTR1A-mediated activity. G-protein coupled receptor for 5-hydroxytryptamine (serotonin). Also functions as a receptor for various drugs and psychoactive substances. Ligand binding causes a conformation change that triggers signaling via guanine nucleotide-binding proteins (G proteins) and modulates the activity of downstream effectors, such as adenylate cyclase. HTR1A is coupled to G(i)/G(o) G alpha proteins and mediates inhibitory neurotransmission: signaling inhibits adenylate cyclase activity and activates a phosphatidylinositol-calcium second messenger system that regulates the release of Ca(2+) ions from intracellular stores. Beta-arrestin family members regulate signaling by mediating both receptor desensitization and resensitization processes. The protein is 5-hydroxytryptamine receptor 1A (HTR1A) of Canis lupus familiaris (Dog).